The sequence spans 898 residues: Alanine--tRNA ligase (898 aa).

Positions 564, 568, 682, and 686 each coordinate Zn(2+).

Belongs to the class-II aminoacyl-tRNA synthetase family. Zn(2+) is required as a cofactor.

The protein resides in the cytoplasm. It carries out the reaction tRNA(Ala) + L-alanine + ATP = L-alanyl-tRNA(Ala) + AMP + diphosphate. In terms of biological role, catalyzes the attachment of alanine to tRNA(Ala) in a two-step reaction: alanine is first activated by ATP to form Ala-AMP and then transferred to the acceptor end of tRNA(Ala). Also edits incorrectly charged Ser-tRNA(Ala) and Gly-tRNA(Ala) via its editing domain. In Beijerinckia indica subsp. indica (strain ATCC 9039 / DSM 1715 / NCIMB 8712), this protein is Alanine--tRNA ligase.